A 256-amino-acid polypeptide reads, in one-letter code: Pimeloyl-[acyl-carrier protein] methyl ester esterase (256 aa).

The AB hydrolase-1 domain maps to 15-242 (HLVLLHGWGL…AAHAPFISHP (228 aa)). Residues Trp-22, 82 to 83 (SL), and 143 to 147 (FLALQ) contribute to the substrate site. Catalysis depends on Ser-82, which acts as the Nucleophile. Catalysis depends on residues Asp-207 and His-235. Position 235 (His-235) interacts with substrate.

The protein belongs to the AB hydrolase superfamily. Carboxylesterase BioH family. In terms of assembly, monomer.

Its subcellular location is the cytoplasm. It catalyses the reaction 6-carboxyhexanoyl-[ACP] methyl ester + H2O = 6-carboxyhexanoyl-[ACP] + methanol + H(+). It participates in cofactor biosynthesis; biotin biosynthesis. The physiological role of BioH is to remove the methyl group introduced by BioC when the pimeloyl moiety is complete. It allows to synthesize pimeloyl-ACP via the fatty acid synthetic pathway through the hydrolysis of the ester bonds of pimeloyl-ACP esters. The sequence is that of Pimeloyl-[acyl-carrier protein] methyl ester esterase from Escherichia fergusonii (strain ATCC 35469 / DSM 13698 / CCUG 18766 / IAM 14443 / JCM 21226 / LMG 7866 / NBRC 102419 / NCTC 12128 / CDC 0568-73).